Here is a 463-residue protein sequence, read N- to C-terminus: Annexin A7 (463 aa).

Pro residues predominate over residues 1–18 (MSYPGYPPTGYPPFPGYP). Disordered regions lie at residues 1 to 34 (MSYP…QYPY) and 77 to 149 (SPGG…MTQG). The tract at residues 1 to 143 (MSYPGYPPTG…GGQAPYPSQP (143 aa)) is repeat-rich region. The segment at 5–20 (GYPPTGYPPFPGYPPA) is 3 X 5 AA tandem repeats of G-Y-P-P-X. Over residues 86-99 (GGQGFGAPPGGAGF) the composition is skewed to gly residues. Annexin repeat units lie at residues 160-231 (FDAM…ALFM), 232-303 (PSTY…SMCQ), 315-387 (QMAQ…TILQ), and 391-462 (NRPA…AIVG). Lysine 208 is modified (N6-acetyllysine).

This sequence belongs to the annexin family. In terms of assembly, interacts with PDCD6.

In terms of biological role, calcium/phospholipid-binding protein which promotes membrane fusion and is involved in exocytosis. The protein is Annexin A7 (Anxa7) of Mus musculus (Mouse).